The following is a 324-amino-acid chain: Antihemorrhagic factor cHLP-A (324 aa).

An N-terminal signal peptide occupies residues 1–19 (MNSLVALVLLGQIIGSTLS). Cystatin fetuin-A-type domains follow at residues 21 to 130 (QLGP…VKCK) and 141 to 254 (RNCP…SDCV). Intrachain disulfides connect cysteine 28–cysteine 315, cysteine 85–cysteine 96, cysteine 110–cysteine 129, cysteine 143–cysteine 146, cysteine 205–cysteine 217, and cysteine 230–cysteine 253. N-linked (GlcNAc...) asparagine glycosylation is present at asparagine 204. N-linked (GlcNAc...) asparagine glycosylation occurs at asparagine 282.

The protein belongs to the fetuin family. In terms of assembly, homodimer. In terms of tissue distribution, expressed by the liver.

The protein resides in the secreted. In terms of biological role, potent inhibitor of hemorrhagic activity but also proteolytic activities. Inhibition occurs by formation of a non-covalent complex between this protein and the proteinases at their metalloproteinase domains. The sequence is that of Antihemorrhagic factor cHLP-A from Gloydius brevicauda (Korean slamosa snake).